The following is a 335-amino-acid chain: Nod factor export ATP-binding protein I (335 aa).

Over residues 1–10 (MTQEVPRRLE) the composition is skewed to basic and acidic residues. The tract at residues 1-22 (MTQEVPRRLEPSPFEWKGDAGP) is disordered. Residues 37–267 (IDLASVTKSY…KIGCQVIEIY (231 aa)) enclose the ABC transporter domain. 69 to 76 (GPNGAGKS) contacts ATP.

The protein belongs to the ABC transporter superfamily. Lipooligosaccharide exporter (TC 3.A.1.102) family. The complex is composed of two ATP-binding proteins (NodI) and two transmembrane proteins (NodJ).

Its subcellular location is the cell inner membrane. Part of the ABC transporter complex NodIJ involved in the export of the nodulation factors (Nod factors), the bacterial signal molecules that induce symbiosis and subsequent nodulation induction. Nod factors are LCO (lipo-chitin oligosaccharide), a modified beta-1,4-linked N-acetylglucosamine oligosaccharide. This subunit is responsible for energy coupling to the transport system. This is Nod factor export ATP-binding protein I from Rhizobium meliloti (Ensifer meliloti).